The following is a 90-amino-acid chain: UPF0297 protein lmo1503 (90 aa).

It belongs to the UPF0297 family.

This chain is UPF0297 protein lmo1503, found in Listeria monocytogenes serovar 1/2a (strain ATCC BAA-679 / EGD-e).